The chain runs to 589 residues: Ufm1-specific protease (589 aa).

Residues 1–22 are disordered; sequence MTNSQTVSLIGPTQMAPQSTPP. Catalysis depends on residues Cys421, Asp545, and His547.

The protein belongs to the peptidase C78 family. In terms of assembly, interacts with odr-4. Expressed in head and tail neurons. Expressed in the amphid head neurons ADL, ASI, ASH, ASJ, ASG, ADF, ASK, AWA, AWB, AWC, and in two tail neurons, the phasmid tail neurons PHA and PHB.

The protein localises to the endoplasmic reticulum membrane. It is found in the cytoplasm. It localises to the perinuclear region. In terms of biological role, thiol protease which recognizes and hydrolyzes the peptide bond at the C-terminal Gly of ufm-1, a ubiquitin-like modifier protein bound to a number of target proteins. Required, with oct-4, for the localization of a subset of 7 transmembrane domain odorant receptors, including odr-10, to the cilia of olfactory neurons AWA and AWC. Operates in aggregation behavior, and responses to oxygen levels. This Caenorhabditis elegans protein is Ufm1-specific protease.